Consider the following 342-residue polypeptide: Platelet-activating factor receptor (342 aa).

The Extracellular segment spans residues 1–16; it reads MEPNNSFRVDSEFRYT. The N-linked (GlcNAc...) asparagine glycan is linked to Asn-4. A helical transmembrane segment spans residues 17–38; sequence LFPIFYSIVFVLGVIANSYVLW. Over 39 to 54 the chain is Cytoplasmic; that stretch reads VFARLYPSKKFNEIKI. A helical membrane pass occupies residues 55–74; the sequence is FMVNLTMADLLFLVTLPLWI. Residues 75–91 are Extracellular-facing; sequence VYYYNQGDWILPKFLCN. Cys-90 and Cys-173 are disulfide-bonded. A helical transmembrane segment spans residues 92–113; the sequence is LAGCFFFINTYCSVAFLAVITY. Residues 114–133 lie on the Cytoplasmic side of the membrane; it reads NRFQAVTRPIKTAQATTRKR. The chain crosses the membrane as a helical span at residues 134–155; the sequence is GFLLSLIIWVSIVGAASYFFVL. Residues 156–184 lie on the Extracellular side of the membrane; that stretch reads DSTNSEPKKTGSGNITRCFEHYEKGSIPV. Asn-169 is a glycosylation site (N-linked (GlcNAc...) asparagine). Residues 185–205 traverse the membrane as a helical segment; sequence LIIHIFLVFSFFLVFLIILFC. The Cytoplasmic portion of the chain corresponds to 206–233; sequence NLVIIRTLLTQQVQMQRNAEVKRRALWM. A helical transmembrane segment spans residues 234–254; that stretch reads VCTVLAVFVICFVPHHLVQLP. Residues 255–276 are Extracellular-facing; sequence WTLAELGFQDTDFHQGINDAHQ. The helical transmembrane segment at 277-296 threads the bilayer; it reads VTLCLLSTNCVLDPIIYCFL. The Cytoplasmic portion of the chain corresponds to 297-342; that stretch reads TKKFRKHLTEKLYSMRESRKCSRATSETGTEVVVQLKDAPIKSLKY.

This sequence belongs to the G-protein coupled receptor 1 family. As to quaternary structure, interacts with ARRB1.

It localises to the cell membrane. Receptor for platelet activating factor, a chemotactic phospholipid mediator that possesses potent inflammatory, smooth-muscle contractile and hypotensive activity. Seems to mediate its action via a G protein that activates a phosphatidylinositol-calcium second messenger system. This is Platelet-activating factor receptor from Capra hircus (Goat).